Reading from the N-terminus, the 246-residue chain is Small ribosomal subunit protein uS2 (246 aa).

Belongs to the universal ribosomal protein uS2 family.

This chain is Small ribosomal subunit protein uS2, found in Burkholderia vietnamiensis (strain G4 / LMG 22486) (Burkholderia cepacia (strain R1808)).